We begin with the raw amino-acid sequence, 144 residues long: Macromomycin (144 aa).

A signal peptide spans 1–32 (MLQNTSRFLARAGATVGVAAGLAFSLPADRDG). 2 cysteine pairs are disulfide-bonded: cysteine 68–cysteine 78 and cysteine 120–cysteine 125.

Belongs to the neocarzinostatin family.

Its function is as follows. Binds non-covalently to a chromophore which is the cytotoxic and mutagenic component of the antibiotic. The chromophore binds to DNA as a weak intercalator and causes single- and double-strand breaks. The chain is Macromomycin from Streptomyces macromomyceticus.